The chain runs to 121 residues: Auxin-responsive protein SAUR32 (121 aa).

The protein belongs to the ARG7 family. In terms of tissue distribution, expressed in roots, leaves and stems.

It is found in the nucleus. Its subcellular location is the cytoplasm. May play a role in the apical hook development. This Arabidopsis thaliana (Mouse-ear cress) protein is Auxin-responsive protein SAUR32.